The chain runs to 184 residues: ATP-dependent protease subunit HslV (184 aa).

Thr12 is an active-site residue. Na(+)-binding residues include Ala166, Cys169, and Thr172.

Belongs to the peptidase T1B family. HslV subfamily. In terms of assembly, a double ring-shaped homohexamer of HslV is capped on each side by a ring-shaped HslU homohexamer. The assembly of the HslU/HslV complex is dependent on binding of ATP.

The protein resides in the cytoplasm. It catalyses the reaction ATP-dependent cleavage of peptide bonds with broad specificity.. With respect to regulation, allosterically activated by HslU binding. Protease subunit of a proteasome-like degradation complex believed to be a general protein degrading machinery. The protein is ATP-dependent protease subunit HslV of Brucella abortus (strain S19).